The sequence spans 136 residues: MLQPKRTKFRKVHKGRNRGIAAGTEVSFGTFGLKAVGRGRLTARQIEAARRAMTRAVKRQGKIWIRVFPDKPITEKPLEVRMGKGKGNVEYWVALIQPGKVLYEMDGVSEEIARNAFALAAAKLPIKTTFVTKTVM.

This sequence belongs to the universal ribosomal protein uL16 family. Part of the 50S ribosomal subunit.

Binds 23S rRNA and is also seen to make contacts with the A and possibly P site tRNAs. The protein is Large ribosomal subunit protein uL16 of Pasteurella multocida (strain Pm70).